The primary structure comprises 564 residues: Nucleolus and neural progenitor protein (564 aa).

A disordered region spans residues 431 to 495 (GSRTSTSEHP…KRRCSGTVQR (65 aa)). Positions 442-459 (RQRRSKYKVLSRQRKPQR) are enriched in basic residues. Residues 442–460 (RQRRSKYKVLSRQRKPQRK) are nuclear localization signal. Polar residues predominate over residues 460-473 (KLQSTLLKETQQVP).

Belongs to the nepro family.

It localises to the nucleus. Its subcellular location is the nucleolus. Functionally, may play a role in cortex development as part of the Notch signaling pathway. Downstream of Notch may repress the expression of proneural genes and inhibit neuronal differentiation thereby maintaining neural progenitors. May also play a role in preimplentation embryo development. This Mus musculus (Mouse) protein is Nucleolus and neural progenitor protein.